We begin with the raw amino-acid sequence, 2226 residues long: Histone-lysine N-methyltransferase ash1 (2226 aa).

Positions 1–145 are disordered; sequence MSCSQNETAA…SDSEDDLPLK (145 aa). Residues 32-52 show a composition bias toward polar residues; it reads ITDQSSQSKSIKSATQFSVQR. Residues 99–111 are compositionally biased toward basic residues; sequence AVSKKVKVKRKKL. 3 positions are modified to phosphoserine: Ser135, Ser136, and Ser138. 2 positions are modified to phosphothreonine: Thr200 and Thr201. Positions 260-269 are enriched in basic residues; that stretch reads PRKRRGRPKK. 5 disordered regions span residues 260-324, 343-367, 673-695, 711-749, and 811-832; these read PRKR…IASS, RVLY…SSNK, AQQL…KRGL, SASA…HKLP, and KRHL…SNSP. The a.T hook 1 DNA-binding region spans 261–273; that stretch reads RKRRGRPKKVVPT. Positions 294–306 are enriched in low complexity; that stretch reads STTSTTQSTTPSP. The segment covering 307–324 has biased composition (polar residues); the sequence is KMQNENAVPTGSLPIASS. Over residues 711-727 the composition is skewed to low complexity; that stretch reads SASASGTPNGSGSSNGN. Ser740, Ser831, and Ser977 each carry phosphoserine. A compositionally biased stretch (low complexity) spans 820–831; it reads SVSGAGSSASNS. Disordered stretches follow at residues 980–1026 and 1049–1230; these read QQTT…DCER and SVVA…TTSL. Positions 989-999 are enriched in acidic residues; it reads HEPEFDPDDEP. 2 consecutive DNA-binding regions (a.T hook) follow at residues 1065 to 1077 and 1095 to 1107; these read GRPR…NREQ and AKKR…QPVL. Pro residues predominate over residues 1108–1117; sequence EEPPPTPPPQ. Over residues 1186 to 1200 the composition is skewed to basic and acidic residues; sequence AEAKRLDSIPTEHDP. The span at 1205–1219 shows a compositional bias: polar residues; it reads ESHNPGPQDYASCSE. Residues 1339–1387 enclose the AWS domain; sequence FDHPTCNCKNQGEKSCLDNCLNRMVYTECSPSNCPAGEKCRNQKIQRHA. The region spanning 1390–1506 is the SET domain; sequence PGVERFMTAD…EGEELTYDYN (117 aa). One can recognise a Post-SET domain in the interval 1514 to 1530; the sequence is EGQPCRCNTPQCRGVIG. 2 disordered regions span residues 1536–1575 and 1616–1648; these read VKPL…GKDI and RASD…SSPS. A compositionally biased stretch (basic residues) spans 1556–1568; it reads GRQRKQKAKKHAQ. Low complexity-rich tracts occupy residues 1619–1628 and 1639–1648; these read DAAATASSPA and RRPSTPSSPS. The Bromo domain maps to 1681 to 1789; that stretch reads KMAVVLRDIC…DSYEQQKIAS (109 aa). The segment at 1808–1839 is disordered; that stretch reads PKEVLSSEEEPGKIAVKKSPGAKERDSPIVPL. Residues 1857-1903 form a PHD-type zinc finger; the sequence is VIRCICGLYKDEGLMIQCSKCMVWQHTECTKADIDADNYQCERCEPR. One can recognise a BAH domain in the interval 1952–2072; it reads KVLPTKKHTY…KTARFFSKAK (121 aa). Residues 2205 to 2226 are disordered; the sequence is SGRGARQRKTQQSSSSSTANST. A compositionally biased stretch (low complexity) spans 2214-2226; it reads TQQSSSSSTANST.

The protein belongs to the class V-like SAM-binding methyltransferase superfamily. Histone-lysine methyltransferase family. SET2 subfamily. Component of a large multiprotein complex distinct from complexes containing ash2 or brm. Interacts (via SET domain) with trx (via SET domain). Interacts with nej/cbp. Expressed throughout development but is present at higher levels during the embryonic and pupal stages than during the larval stages. During the larval stages it accumulates primarily in imaginal disks.

It is found in the nucleus. The protein resides in the chromosome. The catalysed reaction is L-lysyl(4)-[histone H3] + 3 S-adenosyl-L-methionine = N(6),N(6),N(6)-trimethyl-L-lysyl(4)-[histone H3] + 3 S-adenosyl-L-homocysteine + 3 H(+). Trithorax group (TrxG) protein that has histone methyltransferase activity. Specifically trimethylates 'Lys-4' of histone H3 (H3K4me3), a specific tag for epigenetic transcriptional activation. TrxG proteins are generally required to maintain the transcriptionally active state of homeotic genes throughout development. Does not act as a coactivator required for transcriptional activation, but specifically prevents inappropriate Polycomb Group (PcG) silencing of homeotic genes in cells in which they must stay transcriptionally active. The protein is Histone-lysine N-methyltransferase ash1 (ash1) of Drosophila melanogaster (Fruit fly).